Reading from the N-terminus, the 326-residue chain is tRNA-modifying protein YgfZ (326 aa).

Folate-binding residues include Trp-27 and Trp-189.

This sequence belongs to the tRNA-modifying YgfZ family.

It localises to the cytoplasm. In terms of biological role, folate-binding protein involved in regulating the level of ATP-DnaA and in the modification of some tRNAs. It is probably a key factor in regulatory networks that act via tRNA modification, such as initiation of chromosomal replication. This chain is tRNA-modifying protein YgfZ, found in Escherichia coli (strain SMS-3-5 / SECEC).